Reading from the N-terminus, the 344-residue chain is tRNA-specific 2-thiouridylase MnmA (344 aa).

Residues 9 to 16 (AMSGGVDS) and Met34 each bind ATP. Cys92 serves as the catalytic Nucleophile. A disulfide bridge links Cys92 with Cys188. Gly116 serves as a coordination point for ATP. Positions 138–140 (KDQ) are interaction with tRNA. Cys188 acts as the Cysteine persulfide intermediate in catalysis.

Belongs to the MnmA/TRMU family.

It localises to the cytoplasm. The catalysed reaction is S-sulfanyl-L-cysteinyl-[protein] + uridine(34) in tRNA + AH2 + ATP = 2-thiouridine(34) in tRNA + L-cysteinyl-[protein] + A + AMP + diphosphate + H(+). Functionally, catalyzes the 2-thiolation of uridine at the wobble position (U34) of tRNA, leading to the formation of s(2)U34. This is tRNA-specific 2-thiouridylase MnmA from Desulfotalea psychrophila (strain LSv54 / DSM 12343).